Here is a 475-residue protein sequence, read N- to C-terminus: Aspartyl/glutamyl-tRNA(Asn/Gln) amidotransferase subunit B (475 aa).

This sequence belongs to the GatB/GatE family. GatB subfamily. As to quaternary structure, heterotrimer of A, B and C subunits.

The catalysed reaction is L-glutamyl-tRNA(Gln) + L-glutamine + ATP + H2O = L-glutaminyl-tRNA(Gln) + L-glutamate + ADP + phosphate + H(+). It catalyses the reaction L-aspartyl-tRNA(Asn) + L-glutamine + ATP + H2O = L-asparaginyl-tRNA(Asn) + L-glutamate + ADP + phosphate + 2 H(+). Functionally, allows the formation of correctly charged Asn-tRNA(Asn) or Gln-tRNA(Gln) through the transamidation of misacylated Asp-tRNA(Asn) or Glu-tRNA(Gln) in organisms which lack either or both of asparaginyl-tRNA or glutaminyl-tRNA synthetases. The reaction takes place in the presence of glutamine and ATP through an activated phospho-Asp-tRNA(Asn) or phospho-Glu-tRNA(Gln). The polypeptide is Aspartyl/glutamyl-tRNA(Asn/Gln) amidotransferase subunit B (Hydrogenovibrio crunogenus (strain DSM 25203 / XCL-2) (Thiomicrospira crunogena)).